The chain runs to 302 residues: Phosphoribosylaminoimidazole-succinocarboxamide synthase (302 aa).

This sequence belongs to the SAICAR synthetase family.

The catalysed reaction is 5-amino-1-(5-phospho-D-ribosyl)imidazole-4-carboxylate + L-aspartate + ATP = (2S)-2-[5-amino-1-(5-phospho-beta-D-ribosyl)imidazole-4-carboxamido]succinate + ADP + phosphate + 2 H(+). Its pathway is purine metabolism; IMP biosynthesis via de novo pathway; 5-amino-1-(5-phospho-D-ribosyl)imidazole-4-carboxamide from 5-amino-1-(5-phospho-D-ribosyl)imidazole-4-carboxylate: step 1/2. The sequence is that of Phosphoribosylaminoimidazole-succinocarboxamide synthase from Ralstonia nicotianae (strain ATCC BAA-1114 / GMI1000) (Ralstonia solanacearum).